Reading from the N-terminus, the 280-residue chain is Dehydrogenase/reductase SDR family member 2, mitochondrial (280 aa).

The transit peptide at Met1–Met23 directs the protein to the mitochondrion. The NAD(+) site is built by Ser46 and Ile48. Lys96 is modified (N6-acetyllysine; alternate). N6-succinyllysine; alternate is present on Lys96. Ser172 is a binding site for substrate. Residues Tyr185 and Lys189 each contribute to the NAD(+) site. The active-site Proton acceptor is the Tyr185. Lys219 is modified (N6-acetyllysine; alternate). At Lys219 the chain carries N6-succinyllysine; alternate. Thr220 serves as a coordination point for NAD(+). A Phosphoserine modification is found at Ser223. At Lys237 the chain carries N6-succinyllysine.

It belongs to the short-chain dehydrogenases/reductases (SDR) family. In terms of assembly, directly interacts with MDM2; this interaction occurs in the nucleus and does not target DHRS2 to degradation. Widely expressed, with highest levels in liver and kidney, followed by heart, spleen, skeletal muscle and placenta. In hemopoietic cells, expressed in dendritic cells, but not in monocytes, macrophages, granulocytes, nor in B and T lymphocytes.

The protein resides in the mitochondrion matrix. Its subcellular location is the nucleus. Functionally, NADPH-dependent oxidoreductase which catalyzes the reduction of dicarbonyl compounds. Displays reductase activity in vitro with 3,4-hexanedione, 2,3-heptanedione and 1-phenyl-1,2-propanedione as substrates. May function as a dicarbonyl reductase in the enzymatic inactivation of reactive carbonyls involved in covalent modification of cellular components. Also displays a minor hydroxysteroid dehydrogenase activity toward bile acids such as ursodeoxycholic acid (UDCA) and isoursodeoxycholic acid (isoUDCA), which makes it unlikely to control hormone levels. Doesn't show any activity in vitro with retinoids and sugars as substrates. Attenuates MDM2-mediated p53/TP53 degradation, leading to p53/TP53 stabilization and increased transcription activity, resulting in the accumulation of MDM2 and CDKN1A/p21. Reduces proliferation, migration and invasion of cancer cells and well as the production of ROS in cancer. The sequence is that of Dehydrogenase/reductase SDR family member 2, mitochondrial from Homo sapiens (Human).